The following is a 378-amino-acid chain: Odorant receptor 33a (378 aa).

Residues 1–33 (MDSRRKVRSENLYKTYWLYWRLLGVEGDYPFRR) lie on the Cytoplasmic side of the membrane. Residues 34–54 (LVDFTITSFITILFPVHLILG) form a helical membrane-spanning segment. Residues 55–62 (MYKKPQIQ) are Extracellular-facing. The helical transmembrane segment at 63–83 (VFRSLHFTSECLFCSYKFFCF) threads the bilayer. Residues 84-127 (RWKLKEIKTIEGLLQDLDSRVESEEERNYFNQNPSRVARMLSKS) are Cytoplasmic-facing. The helical transmembrane segment at 128-148 (YLVAAISAIITATVAGLFSTG) threads the bilayer. Over 149-163 (RNLMYLGWFPYDFQA) the chain is Extracellular. The helical transmembrane segment at 164-184 (TAAIYWISFSYQAIGSSLLIL) threads the bilayer. Topologically, residues 185-254 (ENLANDSYPP…LLRSTLHLSQ (70 aa)) are cytoplasmic. Residues 255–275 (LGQFLSSGINISITLINILFF) form a helical membrane-spanning segment. Over 276–285 (AENNFAMLYY) the chain is Extracellular. Residues 286 to 306 (AVFFAAMLIELFPSCYYGILM) traverse the membrane as a helical segment. The Cytoplasmic segment spans residues 307–355 (TMEFDKLPYAIFSSNWLKMDKRYNRSLIILMQLTLVPVNIKAGGIVGID). The helical transmembrane segment at 356 to 376 (MSAFFATVRMAYSFYTLALSF) threads the bilayer. The Extracellular segment spans residues 377–378 (RV).

Belongs to the insect chemoreceptor superfamily. Heteromeric odorant receptor channel (TC 1.A.69) family. Or2a subfamily. As to quaternary structure, interacts with Orco. Complexes exist early in the endomembrane system in olfactory sensory neurons (OSNs), coupling these complexes to the conserved ciliary trafficking pathway. Expressed in 1-2 cells on the distal edge of the antenna but not the maxillary palp.

The protein resides in the cell membrane. Functionally, odorant receptor which mediates acceptance or avoidance behavior, depending on its substrates. The odorant receptor repertoire encodes a large collection of odor stimuli that vary widely in identity, intensity, and duration. May form a complex with Orco to form odorant-sensing units, providing sensitive and prolonged odorant signaling and calcium permeability. In Drosophila melanogaster (Fruit fly), this protein is Odorant receptor 33a (Or33a).